A 541-amino-acid polypeptide reads, in one-letter code: Putative nucleobase-ascorbate transporter 10 (541 aa).

Transmembrane regions (helical) follow at residues 52 to 72 (LLSL…MGGG), 79 to 99 (VIQT…FFGT), 101 to 121 (LPVI…IIYS), 141 to 161 (IQGA…LGVW), 173 to 193 (IAPL…PLLA), 196 to 216 (VEVG…LPRF), 235 to 255 (GMIL…SSGV), 299 to 319 (SFAM…LFYA), 376 to 396 (RVIQ…KFGA), 397 to 417 (FFAS…LCFV), 433 to 453 (FNIK…PQYF), and 476 to 496 (VIFM…DCTL).

The protein belongs to the nucleobase:cation symporter-2 (NCS2) (TC 2.A.40) family.

The protein localises to the membrane. This is Putative nucleobase-ascorbate transporter 10 (NAT10) from Arabidopsis thaliana (Mouse-ear cress).